Reading from the N-terminus, the 688-residue chain is Homoaconitase, mitochondrial (688 aa).

Residues cysteine 335, cysteine 395, and cysteine 398 each contribute to the [4Fe-4S] cluster site. Positions 468–494 are disordered; the sequence is SIDLPKSSGNTGATSEEPISEDDTSEA.

Belongs to the aconitase/IPM isomerase family. [4Fe-4S] cluster is required as a cofactor.

It is found in the mitochondrion. It catalyses the reaction (2R,3S)-homoisocitrate = cis-homoaconitate + H2O. The protein operates within amino-acid biosynthesis; L-lysine biosynthesis via AAA pathway; L-alpha-aminoadipate from 2-oxoglutarate: step 3/5. In terms of biological role, catalyzes the reversible hydration of cis-homoaconitate to (2R,3S)-homoisocitrate, a step in the alpha-aminoadipate pathway for lysine biosynthesis. This chain is Homoaconitase, mitochondrial (LYS4), found in Candida parapsilosis (Yeast).